We begin with the raw amino-acid sequence, 110 residues long: UPF0122 protein BcerKBAB4_3669 (110 aa).

It belongs to the UPF0122 family.

Might take part in the signal recognition particle (SRP) pathway. This is inferred from the conservation of its genetic proximity to ftsY/ffh. May be a regulatory protein. The chain is UPF0122 protein BcerKBAB4_3669 from Bacillus mycoides (strain KBAB4) (Bacillus weihenstephanensis).